The sequence spans 1193 residues: DNA-directed RNA polymerase subunit beta (1193 aa).

The segment covering 1152-1161 has biased composition (acidic residues); it reads IEMRDLEDDE. The segment at 1152–1193 is disordered; sequence IEMRDLEDDEETKKADGLALSNDEDAADLAPVDLERDAVTKE. Positions 1184–1193 are enriched in basic and acidic residues; that stretch reads DLERDAVTKE.

This sequence belongs to the RNA polymerase beta chain family. In terms of assembly, the RNAP catalytic core consists of 2 alpha, 1 beta, 1 beta' and 1 omega subunit. When a sigma factor is associated with the core the holoenzyme is formed, which can initiate transcription.

It catalyses the reaction RNA(n) + a ribonucleoside 5'-triphosphate = RNA(n+1) + diphosphate. Functionally, DNA-dependent RNA polymerase catalyzes the transcription of DNA into RNA using the four ribonucleoside triphosphates as substrates. In Bacillus pumilus (strain SAFR-032), this protein is DNA-directed RNA polymerase subunit beta.